Reading from the N-terminus, the 318-residue chain is uncharacterized protein (318 aa).

This is an uncharacterized protein from Autographa californica nuclear polyhedrosis virus (AcMNPV).